The chain runs to 267 residues: 2-oxo-hept-4-ene-1,7-dioate hydratase (267 aa).

The Mg(2+) site is built by E106, E108, and E139.

This sequence belongs to the hydratase/decarboxylase family. As to quaternary structure, homodecamer. Mg(2+) serves as cofactor.

The enzyme catalyses (4Z)-2-oxohept-4-enedioate + H2O = (4S)-4-hydroxy-2-oxoheptanedioate. It participates in aromatic compound metabolism; 4-hydroxyphenylacetate degradation; pyruvate and succinate semialdehyde from 4-hydroxyphenylacetate: step 6/7. Its function is as follows. Transforms 2-oxo-hept-4-ene-1,7-dioate (OHED) into 4-hydroxy-2-oxoheptanedioate, a step in the 4-hydroxyphenylacetic acid (4-HPA) degradation pathway. This is 2-oxo-hept-4-ene-1,7-dioate hydratase from Escherichia coli.